Here is a 95-residue protein sequence, read N- to C-terminus: Small ribosomal subunit protein bS6 (95 aa).

Belongs to the bacterial ribosomal protein bS6 family.

Functionally, binds together with bS18 to 16S ribosomal RNA. The sequence is that of Small ribosomal subunit protein bS6 from Bacillus velezensis (strain DSM 23117 / BGSC 10A6 / LMG 26770 / FZB42) (Bacillus amyloliquefaciens subsp. plantarum).